Reading from the N-terminus, the 292-residue chain is uncharacterized protein (292 aa).

This sequence belongs to the glycosyltransferase 2 family. WaaE/KdtX subfamily.

This is an uncharacterized protein from Rickettsia typhi (strain ATCC VR-144 / Wilmington).